The chain runs to 806 residues: Acetyl-CoA decarbonylase/synthase complex subunit alpha 1 (806 aa).

[4Fe-4S] cluster is bound by residues Cys-73, Cys-76, Cys-77, Cys-79, Cys-84, and Cys-94. Residue His-117 participates in CO binding. Positions 250, 278, and 323 each coordinate [Ni-4Fe-4S] cluster. 2 4Fe-4S ferredoxin-type domains span residues 407 to 436 (DEEF…IPEA) and 446 to 475 (SYLE…LNII). Cys-417, Cys-420, Cys-423, Cys-427, Cys-455, Cys-458, Cys-461, and Cys-465 together coordinate [4Fe-4S] cluster. 3 residues coordinate [Ni-4Fe-4S] cluster: Cys-523, Cys-552, and Cys-587.

It belongs to the Ni-containing carbon monoxide dehydrogenase family. As to quaternary structure, heterotetramer of two alpha and two epsilon subunits. The ACDS complex is made up of alpha, epsilon, beta, gamma and delta subunits with a probable stoichiometry of (alpha(2)epsilon(2))(4)-beta(8)-(gamma(1)delta(1))(8). [4Fe-4S] cluster serves as cofactor. Requires [Ni-4Fe-4S] cluster as cofactor.

It carries out the reaction CO + 2 oxidized [2Fe-2S]-[ferredoxin] + H2O = 2 reduced [2Fe-2S]-[ferredoxin] + CO2 + 2 H(+). It participates in one-carbon metabolism; methanogenesis from acetate. Part of the ACDS complex that catalyzes the reversible cleavage of acetyl-CoA, allowing growth on acetate as sole source of carbon and energy. The alpha-epsilon subcomponent functions as a carbon monoxide dehydrogenase. The polypeptide is Acetyl-CoA decarbonylase/synthase complex subunit alpha 1 (Methanosarcina acetivorans (strain ATCC 35395 / DSM 2834 / JCM 12185 / C2A)).